A 199-amino-acid polypeptide reads, in one-letter code: Recombination protein RecR (199 aa).

The C4-type zinc-finger motif lies at 56 to 71; sequence CAICGNVSEKETCGIC. The region spanning 79-174 is the Toprim domain; it reads ATICVVEEAK…RVTRLASGLP (96 aa).

This sequence belongs to the RecR family.

Functionally, may play a role in DNA repair. It seems to be involved in an RecBC-independent recombinational process of DNA repair. It may act with RecF and RecO. This is Recombination protein RecR from Clavibacter michiganensis subsp. michiganensis (strain NCPPB 382).